Here is a 120-residue protein sequence, read N- to C-terminus: Aspartate 1-decarboxylase (120 aa).

The Schiff-base intermediate with substrate; via pyruvic acid role is filled by serine 25. A Pyruvic acid (Ser) modification is found at serine 25. Residue threonine 57 participates in substrate binding. The Proton donor role is filled by tyrosine 58. Glycine 73 to alanine 75 contacts substrate.

The protein belongs to the PanD family. As to quaternary structure, heterooctamer of four alpha and four beta subunits. It depends on pyruvate as a cofactor. Is synthesized initially as an inactive proenzyme, which is activated by self-cleavage at a specific serine bond to produce a beta-subunit with a hydroxyl group at its C-terminus and an alpha-subunit with a pyruvoyl group at its N-terminus.

The protein resides in the cytoplasm. The catalysed reaction is L-aspartate + H(+) = beta-alanine + CO2. It functions in the pathway cofactor biosynthesis; (R)-pantothenate biosynthesis; beta-alanine from L-aspartate: step 1/1. Its function is as follows. Catalyzes the pyruvoyl-dependent decarboxylation of aspartate to produce beta-alanine. The chain is Aspartate 1-decarboxylase from Ralstonia nicotianae (strain ATCC BAA-1114 / GMI1000) (Ralstonia solanacearum).